The primary structure comprises 164 residues: Ion-translocating oxidoreductase complex subunit G (164 aa).

Thr-125 bears the FMN phosphoryl threonine mark.

The protein belongs to the RnfG family. As to quaternary structure, the complex is composed of six subunits: RnfA, RnfB, RnfC, RnfD, RnfE and RnfG. FMN is required as a cofactor.

Its function is as follows. Part of a membrane-bound complex that couples electron transfer with translocation of ions across the membrane. The chain is Ion-translocating oxidoreductase complex subunit G from Buchnera aphidicola subsp. Acyrthosiphon pisum (strain APS) (Acyrthosiphon pisum symbiotic bacterium).